The following is a 286-amino-acid chain: Cytotoxin (286 aa).

Residues 267-286 (TFYNYASLVPDLETRVRSAE) constitute a propeptide that is removed on maturation.

It belongs to the aerolysin family.

The protein resides in the secreted. In terms of biological role, cytotoxin is thought to form hydrophilic pores in cell membranes. The sequence is that of Cytotoxin (ctx) from Pseudomonas aeruginosa.